The sequence spans 349 residues: Phosphoribosylformylglycinamidine cyclo-ligase (349 aa).

Belongs to the AIR synthase family.

It is found in the cytoplasm. The catalysed reaction is 2-formamido-N(1)-(5-O-phospho-beta-D-ribosyl)acetamidine + ATP = 5-amino-1-(5-phospho-beta-D-ribosyl)imidazole + ADP + phosphate + H(+). It participates in purine metabolism; IMP biosynthesis via de novo pathway; 5-amino-1-(5-phospho-D-ribosyl)imidazole from N(2)-formyl-N(1)-(5-phospho-D-ribosyl)glycinamide: step 2/2. The protein is Phosphoribosylformylglycinamidine cyclo-ligase of Psychrobacter arcticus (strain DSM 17307 / VKM B-2377 / 273-4).